A 416-amino-acid chain; its full sequence is MTYHPKSDFLRVMQERGYLADCTDMQALDEAMSKGVVPAYIGYDATAASLHVGHLLNIMMLRWLQKTGHKPITLMGGGTTKVGDPSFRSEERPLLTPEKIDANIAGMKQVFARYLDYSDGATGALMLNNAEWLDSLNYLDFLRDIGRHFSVNRMLSFESVKSRLDREQSLSFLEFNYMILQAYDFLELFRRYGCRLQMGGSDQWGNIVNGIDLTRRVLEGEIFGLTSPLLTTSDGRKMGKSAGGAVWLSGEMLAPYDFWQFWRNTTDADVGRFLKLYTELPVEECDRLGALQGAEINGAKIRLANEVTTLLHGREAAEAAEATARAVFEQGGVGGALEVVEIAPATLGEGLSVTHFLVAAGLVTSGKEAKRLVAENGLRFNNEPVSDANAPVTAAMIGDELKVSIGRKKHKLVRLA.

An L-tyrosine-binding site is contributed by Tyr-40. Positions 45-54 (ATAASLHVGH) match the 'HIGH' region motif. 2 residues coordinate L-tyrosine: Tyr-177 and Gln-181. Residues 237-241 (KMGKS) carry the 'KMSKS' region motif. Residue Lys-240 coordinates ATP. One can recognise an S4 RNA-binding domain in the interval 351-416 (LSVTHFLVAA…RKKHKLVRLA (66 aa)).

The protein belongs to the class-I aminoacyl-tRNA synthetase family. TyrS type 1 subfamily. In terms of assembly, homodimer.

It localises to the cytoplasm. It catalyses the reaction tRNA(Tyr) + L-tyrosine + ATP = L-tyrosyl-tRNA(Tyr) + AMP + diphosphate + H(+). Functionally, catalyzes the attachment of tyrosine to tRNA(Tyr) in a two-step reaction: tyrosine is first activated by ATP to form Tyr-AMP and then transferred to the acceptor end of tRNA(Tyr). The polypeptide is Tyrosine--tRNA ligase (Cereibacter sphaeroides (strain ATCC 17025 / ATH 2.4.3) (Rhodobacter sphaeroides)).